The chain runs to 443 residues: Structure-specific endonuclease subunit SLX1 homolog (443 aa).

The tract at residues 1–27 (METFILSSDSDDDSGPPPSKRRTIEGI) is disordered. Positions 171 to 258 (EFYGVYCLIS…PLVSKSLKEK (88 aa)) constitute a GIY-YIG domain. The segment at 340 to 395 (CRICGKDIEKLWSLVRCISATCPSHFHSKCLSENGLKLKNEHVDHVYPLKANCPTC) adopts an SLX1-type zinc-finger fold.

The protein belongs to the SLX1 family. Forms a heterodimer with him-18/slx-4. The cofactor is a divalent metal cation.

It is found in the nucleus. Functionally, catalytic subunit of a heterodimeric structure-specific endonuclease that resolves DNA secondary structures generated during DNA repair and recombination. Has endonuclease activity towards branched DNA substrates, introducing single-strand cuts in duplex DNA close to junctions with ss-DNA (Potential). Has a preference for replication forks over 5' flap structures or Holliday junctions and shows much lower activity toward 3' flap structures. Required for proper crossover distribution through inhibition of crossover formation at the central region of chromosomes. This Caenorhabditis elegans protein is Structure-specific endonuclease subunit SLX1 homolog.